Consider the following 239-residue polypeptide: Ribonuclease PH (239 aa).

Phosphate is bound by residues Arg87 and 125–127 (GTR).

Belongs to the RNase PH family. Homohexameric ring arranged as a trimer of dimers.

It carries out the reaction tRNA(n+1) + phosphate = tRNA(n) + a ribonucleoside 5'-diphosphate. Phosphorolytic 3'-5' exoribonuclease that plays an important role in tRNA 3'-end maturation. Removes nucleotide residues following the 3'-CCA terminus of tRNAs; can also add nucleotides to the ends of RNA molecules by using nucleoside diphosphates as substrates, but this may not be physiologically important. Probably plays a role in initiation of 16S rRNA degradation (leading to ribosome degradation) during starvation. This is Ribonuclease PH from Syntrophomonas wolfei subsp. wolfei (strain DSM 2245B / Goettingen).